The primary structure comprises 390 residues: Pyruvate dehydrogenase E1 component subunit alpha, somatic form, mitochondrial (390 aa).

The transit peptide at 1-29 (MRKMLAAVSRVLAGAAQKPASRVLVASRN) directs the protein to the mitochondrion. An N6-acetyllysine; alternate modification is found at Lys63. Lys63 carries the N6-succinyllysine; alternate modification. Pyruvate is bound by residues His92, Tyr118, Arg119, Ala157, Gly165, Val167, Asp196, Gly197, Ala198, Asn225, and Tyr227. Positions 118 and 119 each coordinate thiamine diphosphate. Residues Gly165, Val167, Asp196, Gly197, Ala198, and Asn225 each contribute to the thiamine diphosphate site. Asp196 lines the Mg(2+) pocket. 2 residues coordinate Mg(2+): Asn225 and Tyr227. Ser232 is modified (phosphoserine; by PDK1). Lys244 bears the N6-acetyllysine; alternate mark. The residue at position 244 (Lys244) is an N6-succinyllysine; alternate. Lys267 is subject to N6-acetyllysine. Residue Lys277 is modified to N6-succinyllysine. His292 is a thiamine diphosphate binding site. Phosphoserine; by PDK1, PDK2, PDK3 and PDK4 is present on Ser293. A Phosphoserine modification is found at Ser295. Ser300 is modified (phosphoserine; by PDK1, PDK2, PDK3 and PDK4). Residue Tyr301 is modified to Phosphotyrosine. Lys313 bears the N6-acetyllysine; alternate mark. Lys313 bears the N6-succinyllysine; alternate mark. An N6-acetyllysine mark is found at Lys321 and Lys336. Lys385 bears the N6-succinyllysine mark.

As to quaternary structure, heterotetramer of two PDHA1 and two PDHB subunits. The heterotetramer interacts with DLAT, and is part of the multimeric pyruvate dehydrogenase complex that contains multiple copies of pyruvate dehydrogenase (E1), dihydrolipoamide acetyltransferase (DLAT, E2) and lipoamide dehydrogenase (DLD, E3). These subunits are bound to an inner core composed of about 48 DLAT and 12 PDHX molecules. Thiamine diphosphate serves as cofactor. It depends on Mg(2+) as a cofactor. Phosphorylation at Ser-232, Ser-293 and Ser-300 by PDK family kinases inactivates the enzyme; for this phosphorylation at a single site is sufficient. Phosphorylation at Ser-293 interferes with access to active site, and thereby inactivates the enzyme. Dephosphorylation at all three sites, i.e. at Ser-232, Ser-293 and Ser-300, is required for reactivation. In terms of processing, acetylation alters the phosphorylation pattern. Deacetylated by SIRT3. In all tissues, but in very low amount in testis.

It is found in the mitochondrion matrix. The enzyme catalyses N(6)-[(R)-lipoyl]-L-lysyl-[protein] + pyruvate + H(+) = N(6)-[(R)-S(8)-acetyldihydrolipoyl]-L-lysyl-[protein] + CO2. With respect to regulation, pyruvate dehydrogenase activity is inhibited by phosphorylation of PDHA1; it is reactivated by dephosphorylation. In terms of biological role, the pyruvate dehydrogenase complex catalyzes the overall conversion of pyruvate to acetyl-CoA and CO(2), and thereby links the glycolytic pathway to the tricarboxylic cycle. The sequence is that of Pyruvate dehydrogenase E1 component subunit alpha, somatic form, mitochondrial (Pdha1) from Rattus norvegicus (Rat).